A 442-amino-acid polypeptide reads, in one-letter code: Matrix remodeling-associated protein 8 (442 aa).

A signal peptide spans 1–19; sequence MELLSRVLLWKLLLLQSSA. The Extracellular segment spans residues 20 to 340; it reads VLSSGPSGTA…PEDHTHFFQQ (321 aa). 2 consecutive Ig-like V-type domains span residues 25–156 and 159–291; these read PSGT…LEVT and PLLS…LQVT. Disulfide bonds link C53–C136 and C185–C271. An N-linked (GlcNAc...) asparagine glycan is attached at N118. An RGD 1 motif is present at residues 128–130; sequence RGD. S227 is modified (phosphoserine). Residues 251–253 carry the RGD 2 motif; sequence RGD. The interval 296–319 is disordered; it reads EPPARASPGNGSGHSSAPSPDPTL. N-linked (GlcNAc...) asparagine glycosylation occurs at N305. The helical transmembrane segment at 341-361 threads the bilayer; that stretch reads LGYVLATLLLFILLLITVVLA. At 362–442 the chain is on the cytoplasmic side; it reads TRYRHSGGCK…DKEFRKEYCK (81 aa).

In terms of assembly, homodimer in cis. Does not appear to form trans-homodimers. Interacts with ITGB3; the interaction inhibits ITGAV:ITGB3 heterodimer formation. In terms of tissue distribution, widely expressed (at protein level). Highly expressed in brain where it localizes to the glia limitans, which is formed by the endfeet of astrocytes surrounding capillaries, and beneath the pia mater (at protein level). In lung, detected in epithelial cells of the bronchus (at protein level). Expressed in intercalated disks in the heart (at protein level). Detected in pancreatic alpha-cells in the islet of Langerhans (at protein level). In kidney, found in the brush border of the proximal convoluted tubule (at protein level). Expressed in the epithelium of the small intestine (at protein level). Weakly expressed in liver (at protein level). Detected in myeloid cells.

It is found in the cell membrane. Its subcellular location is the cell junction. The protein localises to the tight junction. It localises to the cytoplasm. The protein resides in the cell projection. It is found in the cilium membrane. Its subcellular location is the nucleus. Functionally, transmembrane protein which can modulate activity of various signaling pathways, probably via binding to integrin ITGAV:ITGB3. Mediates heterophilic cell-cell interactions in vitro. Inhibits osteoclastogenesis downstream of TNFSF11/RANKL and CSF1, where it may function by attenuating signaling via integrin ITGB3 and MAP kinase p38. Plays a role in cartilage formation where it promotes proliferation and maturation of growth plate chondrocytes. Stimulates formation of primary cilia in chondrocytes. Enhances expression of genes involved in the hedgehog signaling pathway in chondrocytes, including the hedgehog signaling molecule IHH; may also promote signaling via the PTHLH/PTHrP pathway. Plays a role in angiogenesis where it suppresses migration of endothelial cells and also promotes their apoptosis. Inhibits VEGF-induced activation of AKT and p38 MAP kinase in endothelial cells. Also inhibits VTN (vitronectin)-mediated integrin ITGAV:ITGB3 signaling and activation of PTK2/FAK. May play a role in the maturation and maintenance of the blood-brain barrier. In Mus musculus (Mouse), this protein is Matrix remodeling-associated protein 8.